The primary structure comprises 274 residues: NADH-ubiquinone oxidoreductase chain 2 (274 aa).

8 helical membrane passes run 28 to 48, 54 to 74, 79 to 99, 107 to 127, 128 to 148, 171 to 191, 206 to 226, and 254 to 274; these read MIIM…FWFP, LTWM…LMLI, IKYL…IGGL, LMAF…MFSE, SIWL…TFMF, FTLF…GFLP, FLLT…LRIC, and LIMT…YFMF.

The protein belongs to the complex I subunit 2 family.

The protein localises to the mitochondrion inner membrane. The catalysed reaction is a ubiquinone + NADH + 5 H(+)(in) = a ubiquinol + NAD(+) + 4 H(+)(out). Core subunit of the mitochondrial membrane respiratory chain NADH dehydrogenase (Complex I) that is believed to belong to the minimal assembly required for catalysis. Complex I functions in the transfer of electrons from NADH to the respiratory chain. The immediate electron acceptor for the enzyme is believed to be ubiquinone. The chain is NADH-ubiquinone oxidoreductase chain 2 (mt:ND2) from Drosophila sechellia (Fruit fly).